The primary structure comprises 266 residues: 15-hydroxyprostaglandin dehydrogenase [NAD(+)] (266 aa).

NAD(+)-binding positions include 12 to 20, 36 to 37, 63 to 65, and Asn91; these read GAAQGIGRA, DW, and CDV. Substrate contacts are provided by Ser138 and Gln148. Tyr151 acts as the Proton acceptor in catalysis. Residues 151-155 and 186-188 contribute to the NAD(+) site; these read YCASK and VNT.

The protein belongs to the short-chain dehydrogenases/reductases (SDR) family. In terms of assembly, homodimer.

It is found in the cytoplasm. The catalysed reaction is prostaglandin E2 + NAD(+) = 15-oxoprostaglandin E2 + NADH + H(+). It carries out the reaction (15S)-hydroxy-(5Z,8Z,11Z,13E)-eicosatetraenoate + NAD(+) = 15-oxo-(5Z,8Z,11Z,13E)-eicosatetraenoate + NADH + H(+). The enzyme catalyses (11R)-hydroxy-(5Z,8Z,12E,14Z)-eicosatetraenoate + NAD(+) = 11-oxo-(5Z,8Z,12E,14Z)-eicosatetraenoate + NADH + H(+). It catalyses the reaction lipoxin A4 + NAD(+) = 15-oxo-(5S,6R)-dihydroxy-(7E,9E,11Z,13E)-eicosatetraenoate + NADH + H(+). The catalysed reaction is 15-oxo-(5S,6R)-dihydroxy-(7E,9E,11Z)-eicosatrienoate + NADH + H(+) = (5S,6R,15S)-trihydroxy-(7E,9E,11Z)-eicosatrienoate + NAD(+). It carries out the reaction prostaglandin A1 + NAD(+) = 15-oxo-prostaglandin A1 + NADH + H(+). The enzyme catalyses prostaglandin E1 + NAD(+) = 15-oxoprostaglandin E1 + NADH + H(+). It catalyses the reaction 14-hydroxy-(4Z,7Z,10Z,12E,16Z,19Z)-docosahexaenoate + NAD(+) = 14-oxo-(4Z,7Z,10Z,12E,16Z,19Z)-docosahexaenoate + NADH + H(+). The catalysed reaction is resolvin E1 + NAD(+) = 18-oxo-resolvin E1 + NADH + H(+). It carries out the reaction resolvin D1 + NAD(+) = 8-oxoresolvin D1 + NADH + H(+). The enzyme catalyses resolvin D1 + NAD(+) = 17-oxoresolvin D1 + NADH + H(+). It catalyses the reaction resolvin D2 + NAD(+) = 7-oxoresolvin D2 + NADH + H(+). The catalysed reaction is resolvin D2 + NAD(+) = 16-oxoresolvin D2 + NADH + H(+). Catalyzes the NAD-dependent dehydrogenation (oxidation) of a broad array of hydroxylated polyunsaturated fatty acids (mainly eicosanoids and docosanoids, including prostaglandins, lipoxins and resolvins), yielding their corresponding keto (oxo) metabolites. Decreases the levels of the pro-proliferative prostaglandins such as prostaglandin E2 (whose activity is increased in cancer because of an increase in the expression of cyclooxygenase 2) and generates oxo-fatty acid products that can profoundly influence cell function by abrogating pro-inflammatory cytokine expression. Converts resolvins E1, D1 and D2 to their oxo products, which represents a mode of resolvin inactivation. Resolvin E1 plays important roles during the resolution phase of acute inflammation, while resolvins D1 and D2 have a unique role in obesity-induced adipose inflammation. This Macaca fascicularis (Crab-eating macaque) protein is 15-hydroxyprostaglandin dehydrogenase [NAD(+)] (HPGD).